The sequence spans 459 residues: Cell division protein FtsZ (459 aa).

GTP-binding positions include glycine 25–asparagine 29, glycine 112–glycine 114, glutamate 143, arginine 147, and aspartate 191. Disordered regions lie at residues aspartate 383 to glutamate 405 and isoleucine 427 to aspartate 459.

Belongs to the FtsZ family. Homodimer. Polymerizes to form a dynamic ring structure in a strictly GTP-dependent manner. Interacts directly with several other division proteins.

The protein resides in the cytoplasm. Functionally, essential cell division protein that forms a contractile ring structure (Z ring) at the future cell division site. The regulation of the ring assembly controls the timing and the location of cell division. One of the functions of the FtsZ ring is to recruit other cell division proteins to the septum to produce a new cell wall between the dividing cells. Binds GTP and shows GTPase activity. This Rickettsia bellii (strain RML369-C) protein is Cell division protein FtsZ.